The primary structure comprises 498 residues: ATP synthase subunit beta, chloroplastic (498 aa).

Position 6 is a phosphothreonine (T6). S13 bears the Phosphoserine mark. Residue 172-179 (GGAGVGKT) participates in ATP binding.

Belongs to the ATPase alpha/beta chains family. F-type ATPases have 2 components, CF(1) - the catalytic core - and CF(0) - the membrane proton channel. CF(1) has five subunits: alpha(3), beta(3), gamma(1), delta(1), epsilon(1). CF(0) has four main subunits: a(1), b(1), b'(1) and c(9-12).

The protein resides in the plastid. It localises to the chloroplast thylakoid membrane. It carries out the reaction ATP + H2O + 4 H(+)(in) = ADP + phosphate + 5 H(+)(out). Produces ATP from ADP in the presence of a proton gradient across the membrane. The catalytic sites are hosted primarily by the beta subunits. This chain is ATP synthase subunit beta, chloroplastic, found in Brassica napus (Rape).